Here is a 1392-residue protein sequence, read N- to C-terminus: MNNPKWTPAQQAAIDLKGQLLVAAAAGSGKTAVLVQRLFKQITDVDEQVDVDRFLVVTFTKAAAAEMRERIGKALDEALFGAAEPAQVEHLLQQRALLYRASITTLHSFCMELIRQYFYLIELDPAFRVADEAEADLLRQDTLEDLFEAYYGEETPAFQSLVDAFGTDRDDQPLMASILRLHEFAMSQVHPGEWLEHLPAAYDWHSLDDLMESPWGQVVRQGVRDKVEEGLILLERAYRLAELPGGPVHYLPVLEDDQSRLGFLREMAEKGTWSDIETAFKSAAAFPGLPRGSKKNLPDSLIDEENSKRLREESKKARDEAKKKLEEIKNTVFSVPLTDQLPFLNKMGELVGTLAQVTQHFAREYQKAKRQRNCVDFSDLEHYALQLLAKDKQPTEIALKLQAYYAEVLVDEYQDINPVQERILQLVSRQEEGKANLFMVGDVKQSIYRFRMADPGLFLRKYGEFPHYQEGGGAAPNLVIDLNQNFRSRPEVIQGINYLFYQIMTEGAGEIIYDEQAALRPGAKFVSDGELRTAEGPIEVHLFDPKAIDLSLGQKRGAEDAATGADSPAKGEGEEFEQNREPESGDDESSLEEAETARIEARLVAARIQKMVLEREFQIHDKELGDYRPVQYADIVILMRSLASVASVYAEEFQKAGIPVYAETNSGYFGTNEVDTVLSLLKIIDNPRLDIPFAAVLRSPLVGMNGTELGKLRSLLPQGDFYETLVLTFWAGDAHRQEEGHEFYSEIREILGKHWESLPQLEVKVRHILETSPEIKEKVDAFFPKLQEWRHRSRRTSLADLLWHLYEDTGYLAYVGTLPAGAQRQANLRVLYDRACRYEATNYRGLFRFLRFLEKFQSQGKDLGNASIVGEKENVVRFITVHSSKGLEFPVVFIAGLGKKFNTRSLSSQLLLHSHLGVGIPLIDIENQVRYPSVIQYAVKERLWQEALAEELRILYVALTRGKERLFLFGHQHKLAEAINKWRSLALSCPDTAFPDGQLRGAKTYLDWLGPALVRHPEDLFKLGSFPTASELPDSSSQWKVILHDQIAGKGPVQEATSSQDEIILPDQETLGEREASEETEIPGETEASGKTEIPGETKNSEETKTSEDKKNLEAQTPETADLDTKNLQEEVFRQLNWQYPYPEGVNQSAKTSVSELKRQSLWYMDNEYSSPSSSSSSSPSALSAPSFLRPQFIVSRKELTPAERGTAVHAAIQHLPLALWRDTWEELAQEVRESMLQEHIDSLIRREILSAEQGGAVSVSQLKNLLDSTSGKRLWEAEEVRREVPFTLSLRLRAQKEPVLVQGIIDAVLLSHQEHEAQVMDFKTDNLAGVPDPELVLTQRYGLQLGLYALAVERLLKVPVRECIIYATSLNREFVMQREAVQAALESVVIV.

One can recognise a UvrD-like helicase ATP-binding domain in the interval 3 to 489 (NPKWTPAQQA…IDLNQNFRSR (487 aa)). 24–31 (AAAGSGKT) contacts ATP. Disordered regions lie at residues 291–319 (RGSK…KARD), 556–594 (RGAE…LEEA), and 1051–1126 (GPVQ…LDTK). 2 stretches are compositionally biased toward basic and acidic residues: residues 305–319 (ENSK…KARD) and 569–583 (AKGE…REPE). The region spanning 556–886 (RGAEDAATGA…RFITVHSSKG (331 aa)) is the UvrD-like helicase C-terminal domain. A compositionally biased stretch (acidic residues) spans 584 to 594 (SGDDESSLEEA). The segment covering 1088–1113 (ASGKTEIPGETKNSEETKTSEDKKNL) has biased composition (basic and acidic residues).

It belongs to the helicase family. AddA subfamily. In terms of assembly, heterodimer of AddA and AddB/RexB. It depends on Mg(2+) as a cofactor.

The catalysed reaction is Couples ATP hydrolysis with the unwinding of duplex DNA by translocating in the 3'-5' direction.. It catalyses the reaction ATP + H2O = ADP + phosphate + H(+). Its function is as follows. The heterodimer acts as both an ATP-dependent DNA helicase and an ATP-dependent, dual-direction single-stranded exonuclease. Recognizes the chi site generating a DNA molecule suitable for the initiation of homologous recombination. The AddA nuclease domain is required for chi fragment generation; this subunit has the helicase and 3' -&gt; 5' nuclease activities. This chain is ATP-dependent helicase/nuclease subunit A, found in Desulfitobacterium hafniense (strain Y51).